The chain runs to 253 residues: Imidazole glycerol phosphate synthase subunit HisF (253 aa).

Active-site residues include Asp11 and Asp130.

This sequence belongs to the HisA/HisF family. Heterodimer of HisH and HisF.

It localises to the cytoplasm. It carries out the reaction 5-[(5-phospho-1-deoxy-D-ribulos-1-ylimino)methylamino]-1-(5-phospho-beta-D-ribosyl)imidazole-4-carboxamide + L-glutamine = D-erythro-1-(imidazol-4-yl)glycerol 3-phosphate + 5-amino-1-(5-phospho-beta-D-ribosyl)imidazole-4-carboxamide + L-glutamate + H(+). The protein operates within amino-acid biosynthesis; L-histidine biosynthesis; L-histidine from 5-phospho-alpha-D-ribose 1-diphosphate: step 5/9. In terms of biological role, IGPS catalyzes the conversion of PRFAR and glutamine to IGP, AICAR and glutamate. The HisF subunit catalyzes the cyclization activity that produces IGP and AICAR from PRFAR using the ammonia provided by the HisH subunit. The chain is Imidazole glycerol phosphate synthase subunit HisF from Lysinibacillus sphaericus (strain C3-41).